The primary structure comprises 228 residues: DNA repair and recombination protein RadB (228 aa).

The protein belongs to the eukaryotic RecA-like protein family. RadB subfamily.

Involved in DNA repair and in homologous recombination. May regulate the cleavage reactions of the branch-structured DNA. Has a very weak ATPase activity that is not stimulated by DNA. Binds DNA but does not promote DNA strands exchange. The polypeptide is DNA repair and recombination protein RadB (Thermococcus sibiricus (strain DSM 12597 / MM 739)).